The following is a 275-amino-acid chain: Beta-lactamase OXA-15 (275 aa).

An N-terminal signal peptide occupies residues 1 to 21; that stretch reads MAIRIFAILFSIFSLATFAHA. Ser72 acts as the Acyl-ester intermediate in catalysis. Lys75 is subject to N6-carboxylysine. Position 210-212 (210-212) interacts with substrate; that stretch reads KTG.

It belongs to the class-D beta-lactamase family.

It catalyses the reaction a beta-lactam + H2O = a substituted beta-amino acid. Functionally, hydrolyzes oxacillin, first-generation cephalosporins and ceftazidime. Does not hydrolyze cefotaxime or carbapenems. The sequence is that of Beta-lactamase OXA-15 (bla) from Pseudomonas aeruginosa.